Here is a 623-residue protein sequence, read N- to C-terminus: tRNA uridine 5-carboxymethylaminomethyl modification enzyme MnmG (623 aa).

10 to 15 is a binding site for FAD; that stretch reads GGGHAG. 269 to 283 contacts NAD(+); the sequence is GPRYCPSIEDKIVRF.

This sequence belongs to the MnmG family. Homodimer. Heterotetramer of two MnmE and two MnmG subunits. The cofactor is FAD.

The protein resides in the cytoplasm. In terms of biological role, NAD-binding protein involved in the addition of a carboxymethylaminomethyl (cmnm) group at the wobble position (U34) of certain tRNAs, forming tRNA-cmnm(5)s(2)U34. The polypeptide is tRNA uridine 5-carboxymethylaminomethyl modification enzyme MnmG (Rhizobium meliloti (strain 1021) (Ensifer meliloti)).